The sequence spans 242 residues: Small ribosomal subunit protein uS3 (242 aa).

In terms of domain architecture, KH type-2 spans 39–110 (IRKFIHKKYG…QVRINVVEVE (72 aa)). Residues 216–242 (QTMPVGANPRRRASRRPQQFEDRSNEG) are disordered. The span at 233-242 (QQFEDRSNEG) shows a compositional bias: basic and acidic residues.

This sequence belongs to the universal ribosomal protein uS3 family. Part of the 30S ribosomal subunit. Forms a tight complex with proteins S10 and S14.

Functionally, binds the lower part of the 30S subunit head. Binds mRNA in the 70S ribosome, positioning it for translation. This is Small ribosomal subunit protein uS3 from Synechococcus sp. (strain CC9902).